We begin with the raw amino-acid sequence, 575 residues long: MAEPNDVAAAGAAAIAASFEAYQEERARITRRARERFEKRDWAAGQADARERLDLRDRLVNACVGTVRAELGGAAHDHGLWRAMKELYEARVESRPDREIGQSFFNSVTRRVFVTVGVDPAIEFLAADGPAVREGPVPVYARYRREVSTEALLRTVLRACAFAAPYEDLERDARIAAIELDSHLRELDDGQPIEALELVKAVFYRGKGAYLVGRLRRGRYTTPLVLALVHGERGVVLDAILFTQEDVSIVFSFTRSYFHVEVERPRELVAFLSTLLPLKRVSELYIALGFNKHGKTELYREIARHIAETGEAFVPARGDKGLVMSVFTLPGLDVVFKVIKDEFKPPKQTTRREVMDKYRHVFRHDRAGRLVDAQEFEHLAFPADRFSPEVLRELSEECRGSIEIGRAEISVKHLYAERRVTPLNLFIREADEWTARQAVLDFGRALKDLAATNTFPGDLLLKNFGVTRHGRVIFYDYDELTRVTDCVFRDLPTPSGDDEETSGEPWFYVGQDDVFPEELLPFLGLAGRLREVFLQAHGDLLTARYWRAIQERIREGEIVDIYPYREEQRLVHGYE.

ATP-binding positions include alanine 316 to leucine 322 and lysine 337. Residue aspartate 372 is part of the active site.

The protein belongs to the AceK family.

Its subcellular location is the cytoplasm. The enzyme catalyses L-seryl-[isocitrate dehydrogenase] + ATP = O-phospho-L-seryl-[isocitrate dehydrogenase] + ADP + H(+). Functionally, bifunctional enzyme which can phosphorylate or dephosphorylate isocitrate dehydrogenase (IDH) on a specific serine residue. This is a regulatory mechanism which enables bacteria to bypass the Krebs cycle via the glyoxylate shunt in response to the source of carbon. When bacteria are grown on glucose, IDH is fully active and unphosphorylated, but when grown on acetate or ethanol, the activity of IDH declines drastically concomitant with its phosphorylation. This Anaeromyxobacter sp. (strain Fw109-5) protein is Isocitrate dehydrogenase kinase/phosphatase.